Reading from the N-terminus, the 601-residue chain is Amino-acid acetyltransferase, mitochondrial (601 aa).

Positions 401–558 (FTMDNLIASK…KKKQNNKKKK (158 aa)) constitute an N-acetyltransferase domain.

This sequence belongs to the acetyltransferase family.

The protein localises to the mitochondrion. It carries out the reaction L-glutamate + acetyl-CoA = N-acetyl-L-glutamate + CoA + H(+). It participates in amino-acid biosynthesis; L-arginine biosynthesis; N(2)-acetyl-L-ornithine from L-glutamate: step 1/4. In terms of biological role, N-acetylglutamate synthase involved in arginine biosynthesis. The polypeptide is Amino-acid acetyltransferase, mitochondrial (ARG2) (Lodderomyces elongisporus (strain ATCC 11503 / CBS 2605 / JCM 1781 / NBRC 1676 / NRRL YB-4239) (Yeast)).